Consider the following 364-residue polypeptide: Dihydroorotase (364 aa).

H14, H16, K98, H137, H180, and D258 together coordinate Zn(2+). K98 carries the N6-carboxylysine modification.

The protein belongs to the metallo-dependent hydrolases superfamily. DHOase family. Class II DHOase subfamily. It depends on Zn(2+) as a cofactor.

The enzyme catalyses (S)-dihydroorotate + H2O = N-carbamoyl-L-aspartate + H(+). It functions in the pathway pyrimidine metabolism; UMP biosynthesis via de novo pathway; (S)-dihydroorotate from bicarbonate: step 3/3. Its function is as follows. Catalyzes the conversion of ureidosuccinic acid (USA) to dihydroorotate, the third step of the de novo pyrimidine biosynthetic pathway. This chain is Dihydroorotase (URA4), found in Saccharomyces cerevisiae (strain ATCC 204508 / S288c) (Baker's yeast).